Reading from the N-terminus, the 494-residue chain is Protein translocase subunit SecD (494 aa).

A run of 6 helical transmembrane segments spans residues 7-27, 322-342, 345-365, 372-392, 420-440, and 441-461; these read WFALLIALVISAFLLCINLPF, LIAALLGLSLVAIFMVSFYRL, FIAIFALSFYALFNIAIYALI, PGVAGFVLSIGMAVDANVLIF, IIDGHITTLISCISLFYLGTG, and FVKGFAATLGIGVFISLFTAL.

This sequence belongs to the SecD/SecF family. SecD subfamily. Forms a complex with SecF. Part of the essential Sec protein translocation apparatus which comprises SecA, SecYEG and auxiliary proteins SecDF. Other proteins may also be involved.

It localises to the cell inner membrane. Part of the Sec protein translocase complex. Interacts with the SecYEG preprotein conducting channel. SecDF uses the proton motive force (PMF) to complete protein translocation after the ATP-dependent function of SecA. In terms of biological role, probably participates in protein translocation into and across both the cytoplasmic and thylakoid membranes in cyanobacterial cells. In Prochlorococcus marinus (strain SARG / CCMP1375 / SS120), this protein is Protein translocase subunit SecD.